Consider the following 499-residue polypeptide: Glycerol kinase (499 aa).

ADP is bound at residue Thr-13. ATP-binding residues include Thr-13, Thr-14, and Ser-15. Residue Thr-13 participates in sn-glycerol 3-phosphate binding. Arg-17 serves as a coordination point for ADP. Arg-83, Glu-84, Tyr-135, and Asp-245 together coordinate sn-glycerol 3-phosphate. Glycerol-binding residues include Arg-83, Glu-84, Tyr-135, Asp-245, and Gln-246. The ADP site is built by Thr-267 and Gly-310. ATP is bound by residues Thr-267, Gly-310, Gln-314, and Ala-411. ADP-binding residues include Ala-411 and Asn-415.

Belongs to the FGGY kinase family.

The catalysed reaction is glycerol + ATP = sn-glycerol 3-phosphate + ADP + H(+). The protein operates within polyol metabolism; glycerol degradation via glycerol kinase pathway; sn-glycerol 3-phosphate from glycerol: step 1/1. Inhibited by fructose 1,6-bisphosphate (FBP). Key enzyme in the regulation of glycerol uptake and metabolism. Catalyzes the phosphorylation of glycerol to yield sn-glycerol 3-phosphate. The sequence is that of Glycerol kinase from Xylella fastidiosa (strain 9a5c).